The sequence spans 479 residues: Alliin lyase (479 aa).

The signal sequence occupies residues Met-1–Ser-25. A propeptide spanning residues Phe-26–Ala-34 is cleaved from the precursor. In terms of domain architecture, EGF-like; atypical spans Glu-47–Ala-93. Asn-53 carries an N-linked (GlcNAc...) asparagine glycan. 3 disulfides stabilise this stretch: Cys-54/Cys-73, Cys-75/Cys-84, and Cys-78/Cys-91. Tyr-126 to Phe-134 serves as a coordination point for chloride. N-linked (GlcNAc...) asparagine glycosylation is found at Asn-180 and Asn-225. Position 285 is an N6-(pyridoxal phosphate)lysine (Lys-285). 2 N-linked (GlcNAc...) asparagine glycosylation sites follow: Asn-342 and Asn-362. Residues Cys-402 and Cys-410 are joined by a disulfide bond.

Belongs to the alliinase family. Homodimer. Requires pyridoxal 5'-phosphate as cofactor.

The protein localises to the vacuole. The catalysed reaction is an S-alkyl-L-cysteine S-oxide = an S-alkyl sulfenate + 2-aminoprop-2-enoate. The chain is Alliin lyase from Allium cepa (Onion).